The primary structure comprises 97 residues: HssA/B-like protein 48 (97 aa).

2 disordered regions span residues 1–20 (MTLF…SKSS) and 78–97 (GSGY…CCGI).

This sequence belongs to the hssA/B family.

This chain is HssA/B-like protein 48 (hssl48), found in Dictyostelium discoideum (Social amoeba).